Reading from the N-terminus, the 407-residue chain is Argininosuccinate synthase (407 aa).

10–18 (AYSGGLDTS) contributes to the ATP binding site. L-citrulline-binding residues include Tyr88 and Ser93. Residue Gly118 participates in ATP binding. Positions 120, 124, and 125 each coordinate L-aspartate. Asn124 contributes to the L-citrulline binding site. L-citrulline-binding residues include Arg128, Ser177, Ser186, Glu263, and Tyr275.

This sequence belongs to the argininosuccinate synthase family. Type 1 subfamily. As to quaternary structure, homotetramer.

Its subcellular location is the cytoplasm. It carries out the reaction L-citrulline + L-aspartate + ATP = 2-(N(omega)-L-arginino)succinate + AMP + diphosphate + H(+). It functions in the pathway amino-acid biosynthesis; L-arginine biosynthesis; L-arginine from L-ornithine and carbamoyl phosphate: step 2/3. This chain is Argininosuccinate synthase, found in Clostridium botulinum (strain Eklund 17B / Type B).